The chain runs to 225 residues: Heptaprenylglyceryl phosphate synthase (225 aa).

Residue Lys6 participates in sn-glycerol 1-phosphate binding. Asp8 and Thr34 together coordinate Mg(2+). Sn-glycerol 1-phosphate is bound by residues 153-158, Gly183, and 203-204; these read YVEYSG and GN.

Belongs to the GGGP/HepGP synthase family. Group I subfamily. In terms of assembly, homodimer. Mg(2+) serves as cofactor.

The catalysed reaction is sn-glycerol 1-phosphate + all-trans-heptaprenyl diphosphate = 3-heptaprenyl-sn-glycero-1-phosphate + diphosphate. Its pathway is membrane lipid metabolism; glycerophospholipid metabolism. Functionally, prenyltransferase that catalyzes in vivo the transfer of the heptaprenyl moiety of heptaprenyl pyrophosphate (HepPP; 35 carbon atoms) to the C3 hydroxyl of sn-glycerol-1-phosphate (G1P), producing heptaprenylglyceryl phosphate (HepGP). This reaction is an ether-bond-formation step in the biosynthesis of archaea-type G1P-based membrane lipids found in Bacillales. The protein is Heptaprenylglyceryl phosphate synthase of Listeria monocytogenes serotype 4a (strain HCC23).